The chain runs to 321 residues: Nucleus-vacuole junction protein 1 (321 aa).

A signal peptide spans Met1–Gly22. The segment at Glu73–Asn125 is TSC13-binding. The helical transmembrane segment at Ile94–Gly114 threads the bilayer. The interval Lys139–Asn195 is OSH1-binding. A phosphoserine mark is found at Ser156 and Ser199. Residues Leu211 to Ile275 are disordered. The interval Asp233 to Tyr321 is VAC8-binding. Residues Ser242–Arg262 show a composition bias toward basic and acidic residues. Residues Thr263–Ser272 are compositionally biased toward low complexity. Phosphoserine is present on residues Ser285 and Ser298. Positions Pro299–Tyr321 are disordered.

In terms of assembly, interacts with OSH1, TSC13 and VAC8.

It is found in the nucleus outer membrane. Involved in the formation of nucleus-vacuole junctions (NVJs) during piecemeal microautophagy of the nucleus (PMN). NVJs are interorganelle interfaces mediated by NVJ1 in the nuclear envelope and VAC8 on the vacuole membrane. Together, NVJ1 and VAC8 form Velcro-like patches through which teardrop-like portions of the nucleus are pinched off into the vacuolar lumen and degraded by the PMN process. Also acts as an outer-nuclear membrane receptor for OSH1 and TSC13. The sequence is that of Nucleus-vacuole junction protein 1 (NVJ1) from Saccharomyces cerevisiae (strain ATCC 204508 / S288c) (Baker's yeast).